Consider the following 389-residue polypeptide: 26S proteasome regulatory subunit 10B (389 aa).

Residue K72 is modified to N6-acetyllysine. Residue 174 to 181 (GPPGTGKT) participates in ATP binding. K206 carries the N6-acetyllysine modification. S244 carries the post-translational modification Phosphoserine.

The protein belongs to the AAA ATPase family. Component of the 19S proteasome regulatory particle complex. The 26S proteasome consists of a 20S core particle (CP) and two 19S regulatory subunits (RP). The regulatory particle is made of a lid composed of 9 subunits, a base containing 6 ATPases including PSMC6 and few additional components. Interacts with PAAF1.

It is found in the cytoplasm. The protein localises to the nucleus. In terms of biological role, component of the 26S proteasome, a multiprotein complex involved in the ATP-dependent degradation of ubiquitinated proteins. This complex plays a key role in the maintenance of protein homeostasis by removing misfolded or damaged proteins, which could impair cellular functions, and by removing proteins whose functions are no longer required. Therefore, the proteasome participates in numerous cellular processes, including cell cycle progression, apoptosis, or DNA damage repair. PSMC6 belongs to the heterohexameric ring of AAA (ATPases associated with diverse cellular activities) proteins that unfolds ubiquitinated target proteins that are concurrently translocated into a proteolytic chamber and degraded into peptides. In Bos taurus (Bovine), this protein is 26S proteasome regulatory subunit 10B (PSMC6).